The following is a 404-amino-acid chain: Cysteine desulfurase IscS (404 aa).

Residues 75-76 (AT), Asn-155, Gln-183, and 203-205 (SAH) contribute to the pyridoxal 5'-phosphate site. Residue Lys-206 is modified to N6-(pyridoxal phosphate)lysine. A pyridoxal 5'-phosphate-binding site is contributed by Thr-243. Cys-328 (cysteine persulfide intermediate) is an active-site residue. Residue Cys-328 participates in [2Fe-2S] cluster binding.

The protein belongs to the class-V pyridoxal-phosphate-dependent aminotransferase family. NifS/IscS subfamily. As to quaternary structure, homodimer. Forms a heterotetramer with IscU, interacts with other sulfur acceptors. Pyridoxal 5'-phosphate is required as a cofactor.

The protein localises to the cytoplasm. The enzyme catalyses (sulfur carrier)-H + L-cysteine = (sulfur carrier)-SH + L-alanine. It functions in the pathway cofactor biosynthesis; iron-sulfur cluster biosynthesis. Its function is as follows. Master enzyme that delivers sulfur to a number of partners involved in Fe-S cluster assembly, tRNA modification or cofactor biosynthesis. Catalyzes the removal of elemental sulfur atoms from cysteine to produce alanine. Functions as a sulfur delivery protein for Fe-S cluster synthesis onto IscU, an Fe-S scaffold assembly protein, as well as other S acceptor proteins. This Vibrio campbellii (strain ATCC BAA-1116) protein is Cysteine desulfurase IscS.